Consider the following 181-residue polypeptide: Early E3 20.3 kDa glycoprotein (181 aa).

4 N-linked (GlcNAc...) asparagine; by host glycosylation sites follow: asparagine 29, asparagine 57, asparagine 70, and asparagine 75.

The protein belongs to the adenoviridae E3_20 family.

In terms of biological role, E3 proteins seem to be dispensable for virus growth in tissue culture cells. They are potentially important for virus growth under special conditions; E3 region may help adenoviruses to evade the immune surveillance of the host. The protein is Early E3 20.3 kDa glycoprotein of Homo sapiens (Human).